We begin with the raw amino-acid sequence, 680 residues long: Lipase 1 (680 aa).

The signal sequence occupies residues 1–34 (MKSQNKYSIRKFSVGASSILIATLLFLSGGQAQA). Positions 35–290 (AEKQVNMGNS…AKAKGDQTNK (256 aa)) are excised as a propeptide. Disordered stretches follow at residues 39–58 (VNMGNSQEDTVTAQSIGDQQ) and 82–260 (KNLH…KNGL). Over residues 40 to 58 (NMGNSQEDTVTAQSIGDQQ) the composition is skewed to polar residues. Basic and acidic residues predominate over residues 84–112 (LHNDKTISEENHRKTDDLNKDQLKDDKKS). 2 stretches are compositionally biased toward polar residues: residues 162 to 193 (SQDLNANNNLPSQSRTKVSPSLNKSDQTSQRE) and 204 to 223 (QPQQKNQANDKITDHNFNNE). Residues 224 to 234 (QEVKPQKDEKT) show a composition bias toward basic and acidic residues. Positions 235–246 (LSVSDLKNNQKS) are enriched in polar residues. Catalysis depends on Ser-408, which acts as the Nucleophile. Catalysis depends on Asp-600, which acts as the Charge relay system. Asp-638 is a Ca(2+) binding site. His-639 (charge relay system) is an active-site residue. The Ca(2+) site is built by Asp-641, Asp-646, and Asp-649.

The protein belongs to the AB hydrolase superfamily. Lipase family.

The protein localises to the secreted. The enzyme catalyses a triacylglycerol + H2O = a diacylglycerol + a fatty acid + H(+). The sequence is that of Lipase 1 (lip1) from Staphylococcus aureus (strain MRSA252).